The sequence spans 311 residues: tRNA dimethylallyltransferase (311 aa).

16 to 23 contacts ATP; it reads GATASGKS. 18 to 23 contributes to the substrate binding site; the sequence is TASGKS. Interaction with substrate tRNA regions lie at residues 41–44 and 165–169; these read DSRQ and QRLIR.

The protein belongs to the IPP transferase family. As to quaternary structure, monomer. Requires Mg(2+) as cofactor.

The catalysed reaction is adenosine(37) in tRNA + dimethylallyl diphosphate = N(6)-dimethylallyladenosine(37) in tRNA + diphosphate. Catalyzes the transfer of a dimethylallyl group onto the adenine at position 37 in tRNAs that read codons beginning with uridine, leading to the formation of N6-(dimethylallyl)adenosine (i(6)A). In Chlorobium chlorochromatii (strain CaD3), this protein is tRNA dimethylallyltransferase.